Here is a 383-residue protein sequence, read N- to C-terminus: S-adenosylmethionine synthase (383 aa).

His15 contributes to the ATP binding site. Asp17 provides a ligand contact to Mg(2+). Glu43 contacts K(+). Glu56 and Gln99 together coordinate L-methionine. A flexible loop region spans residues 99-109 (QSPDINQGVDR). ATP is bound by residues 164–166 (DAK), 230–231 (RF), Asp239, 245–246 (RK), Ala262, and Lys266. Residue Asp239 coordinates L-methionine. Lys270 is a binding site for L-methionine.

This sequence belongs to the AdoMet synthase family. Homotetramer; dimer of dimers. It depends on Mg(2+) as a cofactor. K(+) is required as a cofactor.

The protein localises to the cytoplasm. The catalysed reaction is L-methionine + ATP + H2O = S-adenosyl-L-methionine + phosphate + diphosphate. Its pathway is amino-acid biosynthesis; S-adenosyl-L-methionine biosynthesis; S-adenosyl-L-methionine from L-methionine: step 1/1. Catalyzes the formation of S-adenosylmethionine (AdoMet) from methionine and ATP. The overall synthetic reaction is composed of two sequential steps, AdoMet formation and the subsequent tripolyphosphate hydrolysis which occurs prior to release of AdoMet from the enzyme. The protein is S-adenosylmethionine synthase of Shewanella putrefaciens (strain CN-32 / ATCC BAA-453).